The chain runs to 353 residues: Photosystem II protein D1 (353 aa).

Position 2 is an N-acetylthreonine (threonine 2). Threonine 2 is modified (phosphothreonine). 3 helical membrane-spanning segments follow: residues 29–46 (YIGW…TATS), 118–133 (HFLL…EWEL), and 142–156 (WIAV…AAAA). Histidine 118 contributes to the chlorophyll a binding site. Tyrosine 126 contributes to the pheophytin a binding site. Residues aspartate 170 and glutamate 189 each contribute to the [CaMn4O5] cluster site. Residues 197-218 (FHMLGVAGVFGGSLFSAMHGSL) traverse the membrane as a helical segment. Residue histidine 198 coordinates chlorophyll a. A quinone-binding positions include histidine 215 and 264–265 (SF). Histidine 215 contributes to the Fe cation binding site. Histidine 272 lines the Fe cation pocket. The chain crosses the membrane as a helical span at residues 274 to 288 (FLAAWPVVGIWFTAL). Histidine 332, glutamate 333, aspartate 342, and alanine 344 together coordinate [CaMn4O5] cluster. Positions 345-353 (AVEAPSTNG) are excised as a propeptide.

It belongs to the reaction center PufL/M/PsbA/D family. As to quaternary structure, PSII is composed of 1 copy each of membrane proteins PsbA, PsbB, PsbC, PsbD, PsbE, PsbF, PsbH, PsbI, PsbJ, PsbK, PsbL, PsbM, PsbT, PsbX, PsbY, PsbZ, Psb30/Ycf12, at least 3 peripheral proteins of the oxygen-evolving complex and a large number of cofactors. It forms dimeric complexes. The D1/D2 heterodimer binds P680, chlorophylls that are the primary electron donor of PSII, and subsequent electron acceptors. It shares a non-heme iron and each subunit binds pheophytin, quinone, additional chlorophylls, carotenoids and lipids. D1 provides most of the ligands for the Mn4-Ca-O5 cluster of the oxygen-evolving complex (OEC). There is also a Cl(-1) ion associated with D1 and D2, which is required for oxygen evolution. The PSII complex binds additional chlorophylls, carotenoids and specific lipids. is required as a cofactor. In terms of processing, tyr-161 forms a radical intermediate that is referred to as redox-active TyrZ, YZ or Y-Z. Post-translationally, C-terminally processed by CTPA; processing is essential to allow assembly of the oxygen-evolving complex and thus photosynthetic growth.

The protein localises to the plastid. Its subcellular location is the chloroplast thylakoid membrane. The enzyme catalyses 2 a plastoquinone + 4 hnu + 2 H2O = 2 a plastoquinol + O2. Its function is as follows. Photosystem II (PSII) is a light-driven water:plastoquinone oxidoreductase that uses light energy to abstract electrons from H(2)O, generating O(2) and a proton gradient subsequently used for ATP formation. It consists of a core antenna complex that captures photons, and an electron transfer chain that converts photonic excitation into a charge separation. The D1/D2 (PsbA/PsbD) reaction center heterodimer binds P680, the primary electron donor of PSII as well as several subsequent electron acceptors. This chain is Photosystem II protein D1, found in Nandina domestica (Heavenly bamboo).